We begin with the raw amino-acid sequence, 89 residues long: Small ribosomal subunit protein uS14 (89 aa).

Belongs to the universal ribosomal protein uS14 family. In terms of assembly, part of the 30S ribosomal subunit. Contacts proteins S3 and S10.

Its function is as follows. Binds 16S rRNA, required for the assembly of 30S particles and may also be responsible for determining the conformation of the 16S rRNA at the A site. The protein is Small ribosomal subunit protein uS14 of Oenococcus oeni (strain ATCC BAA-331 / PSU-1).